The sequence spans 413 residues: 4-hydroxy-3-methylbut-2-en-1-yl diphosphate synthase (flavodoxin) (413 aa).

The [4Fe-4S] cluster site is built by C305, C308, C351, and E358.

The protein belongs to the IspG family. Requires [4Fe-4S] cluster as cofactor.

The enzyme catalyses (2E)-4-hydroxy-3-methylbut-2-enyl diphosphate + oxidized [flavodoxin] + H2O + 2 H(+) = 2-C-methyl-D-erythritol 2,4-cyclic diphosphate + reduced [flavodoxin]. Its pathway is isoprenoid biosynthesis; isopentenyl diphosphate biosynthesis via DXP pathway; isopentenyl diphosphate from 1-deoxy-D-xylulose 5-phosphate: step 5/6. Converts 2C-methyl-D-erythritol 2,4-cyclodiphosphate (ME-2,4cPP) into 1-hydroxy-2-methyl-2-(E)-butenyl 4-diphosphate. The sequence is that of 4-hydroxy-3-methylbut-2-en-1-yl diphosphate synthase (flavodoxin) from Bartonella tribocorum (strain CIP 105476 / IBS 506).